Reading from the N-terminus, the 138-residue chain is Urease subunit beta (138 aa).

Residues 115–138 are disordered; the sequence is RMRAAGFGDTGEAAPDDGDTESDQ. The span at 128–138 shows a compositional bias: acidic residues; the sequence is APDDGDTESDQ.

Belongs to the urease beta subunit family. In terms of assembly, heterotrimer of UreA (gamma), UreB (beta) and UreC (alpha) subunits. Three heterotrimers associate to form the active enzyme.

The protein resides in the cytoplasm. It carries out the reaction urea + 2 H2O + H(+) = hydrogencarbonate + 2 NH4(+). It participates in nitrogen metabolism; urea degradation; CO(2) and NH(3) from urea (urease route): step 1/1. This is Urease subunit beta from Haloarcula marismortui (strain ATCC 43049 / DSM 3752 / JCM 8966 / VKM B-1809) (Halobacterium marismortui).